The primary structure comprises 500 residues: NAD(P)H-quinone oxidoreductase chain 4, chloroplastic (500 aa).

The next 14 helical transmembrane spans lie at 4 to 24, 35 to 55, 84 to 104, 113 to 133, 134 to 154, 167 to 187, 211 to 231, 242 to 262, 272 to 292, 305 to 325, 330 to 350, 386 to 406, 416 to 436, and 463 to 483; these read FPWLTIFVGLPISAGFLIFVF, YTIFICVLELLLMTYAFSYYF, GLSLGPILLTGFITTLATLAA, LFHFLMLAMYSGQIGLFSSQN, LLLFFIMWELELIPVYLLLAM, FILYTAGSSVFLLMGALGIAF, ILFYIGFLIAFAVKSPIIPLH, HYSTCMLLAGILLKMGAYGLV, AHSIFSSWLIIVGAIQIIYAA, IAYSSVSHMGFTIIGICSISD, GAILQIISHGFIGAALFFLSG, LALPGMSGFFAELVVFFGIIT, ILITFVTAVGTILTPIYLLSM, and FVSIAILLPVISIGIYPDFVF.

This sequence belongs to the complex I subunit 4 family.

Its subcellular location is the plastid. The protein resides in the chloroplast thylakoid membrane. The enzyme catalyses a plastoquinone + NADH + (n+1) H(+)(in) = a plastoquinol + NAD(+) + n H(+)(out). It catalyses the reaction a plastoquinone + NADPH + (n+1) H(+)(in) = a plastoquinol + NADP(+) + n H(+)(out). The chain is NAD(P)H-quinone oxidoreductase chain 4, chloroplastic from Populus trichocarpa (Western balsam poplar).